Consider the following 180-residue polypeptide: Adenine phosphoribosyltransferase (180 aa).

This sequence belongs to the purine/pyrimidine phosphoribosyltransferase family. In terms of assembly, homodimer.

The protein resides in the cytoplasm. The enzyme catalyses AMP + diphosphate = 5-phospho-alpha-D-ribose 1-diphosphate + adenine. Its pathway is purine metabolism; AMP biosynthesis via salvage pathway; AMP from adenine: step 1/1. Its function is as follows. Catalyzes a salvage reaction resulting in the formation of AMP, that is energically less costly than de novo synthesis. The sequence is that of Adenine phosphoribosyltransferase from Sinorhizobium medicae (strain WSM419) (Ensifer medicae).